Reading from the N-terminus, the 161-residue chain is SsrA-binding protein (161 aa).

This sequence belongs to the SmpB family.

Its subcellular location is the cytoplasm. Functionally, required for rescue of stalled ribosomes mediated by trans-translation. Binds to transfer-messenger RNA (tmRNA), required for stable association of tmRNA with ribosomes. tmRNA and SmpB together mimic tRNA shape, replacing the anticodon stem-loop with SmpB. tmRNA is encoded by the ssrA gene; the 2 termini fold to resemble tRNA(Ala) and it encodes a 'tag peptide', a short internal open reading frame. During trans-translation Ala-aminoacylated tmRNA acts like a tRNA, entering the A-site of stalled ribosomes, displacing the stalled mRNA. The ribosome then switches to translate the ORF on the tmRNA; the nascent peptide is terminated with the 'tag peptide' encoded by the tmRNA and targeted for degradation. The ribosome is freed to recommence translation, which seems to be the essential function of trans-translation. The sequence is that of SsrA-binding protein from Desulforamulus reducens (strain ATCC BAA-1160 / DSM 100696 / MI-1) (Desulfotomaculum reducens).